The chain runs to 122 residues: Large ribosomal subunit protein uL14 (122 aa).

Belongs to the universal ribosomal protein uL14 family. As to quaternary structure, part of the 50S ribosomal subunit. Forms a cluster with proteins L3 and L19. In the 70S ribosome, L14 and L19 interact and together make contacts with the 16S rRNA in bridges B5 and B8.

Functionally, binds to 23S rRNA. Forms part of two intersubunit bridges in the 70S ribosome. This is Large ribosomal subunit protein uL14 from Dehalococcoides mccartyi (strain ATCC BAA-2266 / KCTC 15142 / 195) (Dehalococcoides ethenogenes (strain 195)).